Reading from the N-terminus, the 297-residue chain is N-acetylneuraminate lyase (297 aa).

The aceneuramate site is built by Ser47 and Thr48. Tyr137 (proton donor) is an active-site residue. Catalysis depends on Lys165, which acts as the Schiff-base intermediate with substrate. The aceneuramate site is built by Thr167, Gly189, Asp191, Glu192, and Ser208.

It belongs to the DapA family. NanA subfamily. In terms of assembly, homotetramer.

It localises to the cytoplasm. It catalyses the reaction aceneuramate = aldehydo-N-acetyl-D-mannosamine + pyruvate. It participates in amino-sugar metabolism; N-acetylneuraminate degradation; D-fructose 6-phosphate from N-acetylneuraminate: step 1/5. Its function is as follows. Catalyzes the reversible aldol cleavage of N-acetylneuraminic acid (sialic acid; Neu5Ac) to form pyruvate and N-acetylmannosamine (ManNAc) via a Schiff base intermediate. This Escherichia coli O139:H28 (strain E24377A / ETEC) protein is N-acetylneuraminate lyase.